The following is a 468-amino-acid chain: Protein translocase subunit SecY (468 aa).

At 1 to 20 the chain is on the cytoplasmic side; the sequence is MGARDVIYAMEKWFPEVERP. Residues 21-47 traverse the membrane as a helical segment; sequence KKHVPLKEKFVWTGLALVLYYVLAEIP. Topologically, residues 48 to 58 are extracellular; the sequence is VYGIPKKIQDY. The helical intramembrane region spans 59–66; sequence FQFLRVVL. Residues 59-87 form a discontinuously helical membrane-spanning segment; it reads FQFLRVVLAGRNGSILTLGIGPIVTAGII. Residues 67-78 lie within the membrane without spanning it; sequence AGRNGSILTLGI. Positions 79 to 87 form an intramembrane region, helical; it reads GPIVTAGII. At 88-108 the chain is on the cytoplasmic side; it reads LQLLVGSELIRLDLANPEDRR. A helical transmembrane segment spans residues 109-133; it reads FYQALQRVFSVFMCFFEAAIWVLGG. The Extracellular portion of the chain corresponds to 134–144; it reads AFGRVGVDVTY. The helical transmembrane segment at 145-169 threads the bilayer; it reads TIATLMIIQLALGGIILIVLDELVS. Over 170–175 the chain is Cytoplasmic; it reads KWGIGS. The helical transmembrane segment at 176-194 threads the bilayer; it reads GISLFIAAGVSQRILTRSL. Topologically, residues 195 to 239 are extracellular; the sequence is NPLTDPNIIDPLTGKPAIVGAIPYFIQHILDGDLKGALYRGGSAP. A helical membrane pass occupies residues 240-261; that stretch reads DMIAVTATIIVFLVVVYFESMR. At 262 to 285 the chain is on the cytoplasmic side; the sequence is VEIPLGYRGVTIRGRYPIKFLYVS. A helical transmembrane segment spans residues 286 to 307; it reads NIPIILTFALYANIQLWARVLD. The Extracellular segment spans residues 308-346; that stretch reads RFGHPWLGRFDPVTGNPIGGFVLYVIPPRNIFTVIDNPV. Residues 347–366 form a helical membrane-spanning segment; it reads RAIIYLILTIIFSLLFGFLW. Topologically, residues 367 to 409 are cytoplasmic; the sequence is VELTGLDARTIARQLQRAGLQIPGFRRDPRTLERVLQKYIPYV. A helical membrane pass occupies residues 410–428; sequence TFWGSLTVALISVLADFLG. Topologically, residues 429–431 are extracellular; that stretch reads ALG. A helical membrane pass occupies residues 432–446; it reads TGTGILLTVGILYRF. Over 447–468 the chain is Cytoplasmic; it reads YEEIAREQITEMFPALRRLFKG.

Belongs to the SecY/SEC61-alpha family. In terms of assembly, component of the Sec protein translocase complex. Heterotrimer consisting of alpha (SecY), beta (SecG) and gamma (SecE) subunits. The heterotrimers can form oligomers, although 1 heterotrimer is thought to be able to translocate proteins. Interacts with the ribosome. May interact with SecDF, and other proteins may be involved.

The protein resides in the cell membrane. Functionally, the central subunit of the protein translocation channel SecYEG. Consists of two halves formed by TMs 1-5 and 6-10. These two domains form a lateral gate at the front which open onto the bilayer between TMs 2 and 7, and are clamped together by SecE at the back. The channel is closed by both a pore ring composed of hydrophobic SecY resides and a short helix (helix 2A) on the extracellular side of the membrane which forms a plug. The plug probably moves laterally to allow the channel to open. The ring and the pore may move independently. The protein is Protein translocase subunit SecY of Pyrococcus horikoshii (strain ATCC 700860 / DSM 12428 / JCM 9974 / NBRC 100139 / OT-3).